The primary structure comprises 1876 residues: Vitellogenin-2 (1876 aa).

A signal peptide spans 1–16; it reads MMWKTLLCCLLAVSAA. The region spanning 21–838 is the Vitellogenin domain; sequence WEPGKRYEYH…SRDSFMPKSV (818 aa). 2 N-linked (GlcNAc...) asparagine glycosylation sites follow: asparagine 211 and asparagine 290. The tract at residues 322–424 is disordered; sequence TGEPSQRDSA…SSSSSSEEYL (103 aa). Low complexity-rich tracts occupy residues 330–368 and 387–404; these read SAYA…SSSR and SQPR…SKRS. A glycan (N-linked (GlcNAc...) asparagine) is linked at asparagine 409. Low complexity predominate over residues 411–420; sequence SSSSSSSSSS. Residues asparagine 595, asparagine 631, asparagine 932, asparagine 1012, and asparagine 1055 are each glycosylated (N-linked (GlcNAc...) asparagine). The interval 1192 to 1239 is disordered; sequence SYDNRYTQPEEEEETRQHSKIRRPRSASRKHRRSRHEERAPLENLEVS. Positions 1209–1225 are enriched in basic residues; it reads HSKIRRPRSASRKHRRS. Asparagine 1318, asparagine 1398, asparagine 1417, asparagine 1424, asparagine 1469, asparagine 1532, asparagine 1636, asparagine 1719, asparagine 1760, and asparagine 1770 each carry an N-linked (GlcNAc...) asparagine glycan. In terms of domain architecture, VWFD spans 1518 to 1703; sequence PTCVVDYSKV…TLVRDLDRSR (186 aa). A disulfide bridge links cysteine 1520 with cysteine 1664. The interval 1729 to 1788 is disordered; the sequence is SGIRPYDIDDDSSSSSSSSSSSSSSSSSSKSNSTSSSSSESNESALPRGENKLHRAQQPS. Residues 1741–1772 show a composition bias toward low complexity; the sequence is SSSSSSSSSSSSSSSSSKSNSTSSSSSESNES.

The protein resides in the secreted. Precursor of the egg-yolk proteins that are sources of nutrients during embryonic development. The protein is Vitellogenin-2 (VG2) of Periplaneta americana (American cockroach).